Consider the following 342-residue polypeptide: N-acetyl-gamma-glutamyl-phosphate reductase (342 aa).

Cysteine 149 is an active-site residue.

Belongs to the NAGSA dehydrogenase family. Type 1 subfamily.

The protein resides in the cytoplasm. It catalyses the reaction N-acetyl-L-glutamate 5-semialdehyde + phosphate + NADP(+) = N-acetyl-L-glutamyl 5-phosphate + NADPH + H(+). The protein operates within amino-acid biosynthesis; L-arginine biosynthesis; N(2)-acetyl-L-ornithine from L-glutamate: step 3/4. In terms of biological role, catalyzes the NADPH-dependent reduction of N-acetyl-5-glutamyl phosphate to yield N-acetyl-L-glutamate 5-semialdehyde. This is N-acetyl-gamma-glutamyl-phosphate reductase from Jannaschia sp. (strain CCS1).